The chain runs to 125 residues: Large ribosomal subunit protein mL51 (125 aa).

Residues 1 to 29 (MWSVQKLLWGCRSLLPQGCRSFSLGNRDL) constitute a mitochondrion transit peptide.

The protein belongs to the mitochondrion-specific ribosomal protein mL51 family. As to quaternary structure, component of the mitochondrial ribosome large subunit (39S) which comprises a 16S rRNA and about 50 distinct proteins.

The protein localises to the mitochondrion. In Xenopus laevis (African clawed frog), this protein is Large ribosomal subunit protein mL51 (mrpl51).